Consider the following 441-residue polypeptide: Chitinase-like protein Idgf3 (441 aa).

The first 23 residues, 1 to 23 (MTGSLWLSLALSLAVLAQFKVSA), serve as a signal peptide directing secretion. A GH18 domain is found at 25 to 441 (PNLVCFYDSQ…MLRAIKYRLL (417 aa)). Cys29 and Cys56 are joined by a disulfide. The N-linked (GlcNAc...) asparagine glycan is linked to Asn221. Positions 307-331 (KDSGDSGMPVVPSTQGPAPAGPQSK) are disordered. The cysteines at positions 342 and 425 are disulfide-linked.

The protein belongs to the glycosyl hydrolase 18 family. IDGF subfamily. In terms of processing, glycosylated. In terms of tissue distribution, primarily expressed in yolk cells and fat body. In larvae, it is expressed in small and large salivary gland cells, and weakly expressed in imaginal disks. Less expressed than Idgf2 and Idgf4.

It is found in the secreted. In terms of biological role, cooperates with insulin-like peptides to stimulate the proliferation, polarization and motility of imaginal disk cells. May act by stabilizing the binding of insulin-like peptides to its receptor through a simultaneous interaction with both molecules to form a multiprotein signaling complex. In Drosophila melanogaster (Fruit fly), this protein is Chitinase-like protein Idgf3 (Idgf3).